A 727-amino-acid polypeptide reads, in one-letter code: MAFQKAVKRTVLVCGGALATVLGLSQCSHYRRKQVNLACLKAAGCHTEPVNREPPSREAQLLTLQNTSEFDILVIGGGATGSGCALDAVTRGLKTALVERDDFSSGTSSRSTKLIHGGVRYLQKAIMKLDVEQYRMVKEALHERANLLEIAPHLSAPLPIMLPIYKWWQLPYYWVGIKLYDLVAGSNCLKSSYVLSKSRALEHFPMLQKDKLVGAIVYYDGQHNDARMNLAIALTAARYGAATANYREVVSLLKKTDPETGKERVSGARCKDVLTGLEFDVRAKCVINATGPFTDSVRKMDDNKAPAICQPSAGVHIVMPGYYSPESMGLLDPATSDGRVIFFLPWENMTIAGTTDSPTKNTHHPIPSEEDINFILNEVRNYLSCDVEVRRGDVLAAWSGIRPLVIDPKSADTQSISRNHVVDVSESGLITIAGGKWTTYRSMAEDTVDTAIKVHNLKAGPCRTVGLFLQGGKDWSPTLYIRLVQDYGLESEVAQHLATTYGDKAFEVAKMAKVTGKRWPIVGVRLVSEFPYIEAEVKYGIKEYACTAVDMISRRTRLAFLNIQAAEEALPRIVELMGRELDWSEIRKQAELETATKFLYYEMGSKSRSEQLTDRTEISLRPSDIERYTKRFHKFDADEKGFITIVDVQRVLENINVKIDENTLHEILSEVDLNKNGQVELNEFLQLMSAIQKGRVSGSRLAILMKTAEENLDRRVPIPVDRSCGGL.

Residues 1–42 constitute a mitochondrion transit peptide; the sequence is MAFQKAVKRTVLVCGGALATVLGLSQCSHYRRKQVNLACLKA. 71–99 contributes to the FAD binding site; it reads DILVIGGGATGSGCALDAVTRGLKTALVE. Tyr-601 is subject to Phosphotyrosine. 2 consecutive EF-hand domains span residues 623 to 658 and 659 to 694; these read SDIE…INVK and IDEN…IQKG. Asp-672, Asn-674, Asn-676, Gln-678, and Glu-683 together coordinate Ca(2+).

Belongs to the FAD-dependent glycerol-3-phosphate dehydrogenase family. It depends on FAD as a cofactor.

It is found in the mitochondrion. It carries out the reaction a quinone + sn-glycerol 3-phosphate = dihydroxyacetone phosphate + a quinol. The protein operates within polyol metabolism; glycerol degradation via glycerol kinase pathway; glycerone phosphate from sn-glycerol 3-phosphate (aerobic route): step 1/1. Calcium-binding enhance the activity of the enzyme. Functionally, calcium-responsive mitochondrial glycerol-3-phosphate dehydrogenase which seems to be a key component of the pancreatic beta-cell glucose-sensing device. In Mesocricetus auratus (Golden hamster), this protein is Glycerol-3-phosphate dehydrogenase, mitochondrial (GPD2).